Here is a 372-residue protein sequence, read N- to C-terminus: Cytochrome b (372 aa).

4 consecutive transmembrane segments (helical) span residues 25–45, 69–90, 105–125, and 170–190; these read FGSM…FLAI, WIMQ…YIHI, WLSG…GYVL, and FFAL…IHII. Heme b contacts are provided by His-75 and His-89. Heme b-binding residues include His-174 and His-188. His-193 is a binding site for a ubiquinone. The next 4 helical transmembrane spans lie at 218–238, 280–300, 312–332, and 339–358; these read YKDM…LSFS, LGGA…PFTH, LSQI…WTAS, and FISI…ITIP.

The protein belongs to the cytochrome b family. As to quaternary structure, the cytochrome bc1 complex contains 3 respiratory subunits (MT-CYB, CYC1 and UQCRFS1), 2 core proteins (UQCRC1 and UQCRC2) and probably 6 low-molecular weight proteins. Requires heme b as cofactor.

It localises to the mitochondrion inner membrane. Functionally, component of the ubiquinol-cytochrome c reductase complex (complex III or cytochrome b-c1 complex) that is part of the mitochondrial respiratory chain. The b-c1 complex mediates electron transfer from ubiquinol to cytochrome c. Contributes to the generation of a proton gradient across the mitochondrial membrane that is then used for ATP synthesis. This is Cytochrome b (MT-CYB) from Naja annulata annulata (Banded water cobra).